Reading from the N-terminus, the 354-residue chain is cAMP-dependent protein kinase catalytic subunit 2 (354 aa).

The Protein kinase domain occupies 45–301 (YITRAVLGNG…SSDVKSHPWF (257 aa)). ATP is bound by residues 51 to 59 (LGNGSFGTV) and lysine 74. The Proton acceptor role is filled by aspartate 168. In terms of domain architecture, AGC-kinase C-terminal spans 302 to 354 (QGVDWFGILNQEVTAPYQPTISGAEDLSNFENFEFKDRYKSRINRHPELFANF).

The protein belongs to the protein kinase superfamily. AGC Ser/Thr protein kinase family. cAMP subfamily. In terms of tissue distribution, more abundant in adult body than adult head.

It carries out the reaction L-seryl-[protein] + ATP = O-phospho-L-seryl-[protein] + ADP + H(+). The catalysed reaction is L-threonyl-[protein] + ATP = O-phospho-L-threonyl-[protein] + ADP + H(+). In Drosophila melanogaster (Fruit fly), this protein is cAMP-dependent protein kinase catalytic subunit 2 (Pka-C2).